A 134-amino-acid polypeptide reads, in one-letter code: Cytochrome b (134 aa).

3 helical membrane-spanning segments follow: residues 33–53 (FGSLLGLCLAVQILTGLFLAM), 77–98 (WLIRYMHANGASMFFICLFLHV), and 113–133 (WNMGIILLFAVMATAFMGYVL). Heme b contacts are provided by His-83 and His-97.

It belongs to the cytochrome b family. In terms of assembly, the cytochrome bc1 complex contains 11 subunits: 3 respiratory subunits (MT-CYB, CYC1 and UQCRFS1), 2 core proteins (UQCRC1 and UQCRC2) and 6 low-molecular weight proteins (UQCRH/QCR6, UQCRB/QCR7, UQCRQ/QCR8, UQCR10/QCR9, UQCR11/QCR10 and a cleavage product of UQCRFS1). This cytochrome bc1 complex then forms a dimer. It depends on heme b as a cofactor.

The protein localises to the mitochondrion inner membrane. Component of the ubiquinol-cytochrome c reductase complex (complex III or cytochrome b-c1 complex) that is part of the mitochondrial respiratory chain. The b-c1 complex mediates electron transfer from ubiquinol to cytochrome c. Contributes to the generation of a proton gradient across the mitochondrial membrane that is then used for ATP synthesis. The sequence is that of Cytochrome b (MT-CYB) from Microtus subterraneus (European pine vole).